Here is a 247-residue protein sequence, read N- to C-terminus: Uridylate kinase (247 aa).

18 to 21 (KLSG) is an ATP binding site. Glycine 60 serves as a coordination point for UMP. 2 residues coordinate ATP: glycine 61 and arginine 65. UMP is bound by residues aspartate 80 and 141-148 (TGNPFFTT). ATP is bound by residues threonine 168, tyrosine 174, and aspartate 177.

This sequence belongs to the UMP kinase family. In terms of assembly, homohexamer.

Its subcellular location is the cytoplasm. It carries out the reaction UMP + ATP = UDP + ADP. Its pathway is pyrimidine metabolism; CTP biosynthesis via de novo pathway; UDP from UMP (UMPK route): step 1/1. Its activity is regulated as follows. Inhibited by UTP. Functionally, catalyzes the reversible phosphorylation of UMP to UDP. The protein is Uridylate kinase of Ectopseudomonas mendocina (strain ymp) (Pseudomonas mendocina).